A 349-amino-acid polypeptide reads, in one-letter code: Phenylalanine--tRNA ligase alpha subunit (349 aa).

Glutamate 259 provides a ligand contact to Mg(2+).

The protein belongs to the class-II aminoacyl-tRNA synthetase family. Phe-tRNA synthetase alpha subunit type 1 subfamily. As to quaternary structure, tetramer of two alpha and two beta subunits. Mg(2+) is required as a cofactor.

The protein resides in the cytoplasm. It carries out the reaction tRNA(Phe) + L-phenylalanine + ATP = L-phenylalanyl-tRNA(Phe) + AMP + diphosphate + H(+). The polypeptide is Phenylalanine--tRNA ligase alpha subunit (Lactobacillus gasseri (strain ATCC 33323 / DSM 20243 / BCRC 14619 / CIP 102991 / JCM 1131 / KCTC 3163 / NCIMB 11718 / NCTC 13722 / AM63)).